Consider the following 209-residue polypeptide: Ribosomal RNA large subunit methyltransferase E (209 aa).

The S-adenosyl-L-methionine site is built by Gly63, Trp65, Asp83, Asp99, and Asp124. Residue Lys164 is the Proton acceptor of the active site. The region spanning 191-209 (EASRGRSREVYIVAMGYMG) is the TRAM domain.

Belongs to the class I-like SAM-binding methyltransferase superfamily. RNA methyltransferase RlmE family.

It is found in the cytoplasm. It carries out the reaction uridine(2552) in 23S rRNA + S-adenosyl-L-methionine = 2'-O-methyluridine(2552) in 23S rRNA + S-adenosyl-L-homocysteine + H(+). Its function is as follows. Specifically methylates the uridine in position 2552 of 23S rRNA at the 2'-O position of the ribose in the fully assembled 50S ribosomal subunit. The chain is Ribosomal RNA large subunit methyltransferase E from Histophilus somni (strain 129Pt) (Haemophilus somnus).